The primary structure comprises 236 residues: 2-C-methyl-D-erythritol 4-phosphate cytidylyltransferase (236 aa).

This sequence belongs to the IspD/TarI cytidylyltransferase family. IspD subfamily. In terms of assembly, homodimer.

It catalyses the reaction 2-C-methyl-D-erythritol 4-phosphate + CTP + H(+) = 4-CDP-2-C-methyl-D-erythritol + diphosphate. It participates in isoprenoid biosynthesis; isopentenyl diphosphate biosynthesis via DXP pathway; isopentenyl diphosphate from 1-deoxy-D-xylulose 5-phosphate: step 2/6. Its function is as follows. Catalyzes the formation of 4-diphosphocytidyl-2-C-methyl-D-erythritol from CTP and 2-C-methyl-D-erythritol 4-phosphate (MEP). This chain is 2-C-methyl-D-erythritol 4-phosphate cytidylyltransferase, found in Salmonella typhimurium (strain LT2 / SGSC1412 / ATCC 700720).